The following is a 74-amino-acid chain: MAAKFHLCLLLIILGTITVQGARHPGKPHFFRRQPGSDCASINGRCVPPNERCPNGECHLQSCPGYQEKCCCPV.

An N-terminal signal peptide occupies residues 1-21 (MAAKFHLCLLLIILGTITVQG). A propeptide spanning residues 22–31 (ARHPGKPHFF) is cleaved from the precursor.

The protein belongs to the Cnidaria small cysteine-rich protein (SCRiP) family. beta subfamily. Contains 4 disulfide bonds.

The protein resides in the secreted. The protein localises to the nematocyst. In terms of biological role, induces neurotoxic symptoms on zebrafish. Has also been claimed to be implied in calcification, but tests on homolog proteins suggest that proteins of this family have a neurotoxic function and not a calcification function. The polypeptide is Small cysteine-rich protein 8 (Orbicella faveolata (Mountainous star coral)).